The chain runs to 589 residues: Ufm1-specific protease (589 aa).

Residues methionine 1 to proline 22 are disordered. Residues cysteine 421, aspartate 545, and histidine 547 contribute to the active site.

This sequence belongs to the peptidase C78 family. In terms of assembly, interacts with odr-4. In terms of tissue distribution, expressed in head and tail neurons. Expressed in the amphid head neurons ADL, ASI, ASH, ASJ, ASG, ADF, ASK, AWA, AWB, AWC, and in two tail neurons, the phasmid tail neurons PHA and PHB.

The protein resides in the endoplasmic reticulum membrane. Its subcellular location is the cytoplasm. It is found in the perinuclear region. Functionally, thiol protease which recognizes and hydrolyzes the peptide bond at the C-terminal Gly of ufm-1, a ubiquitin-like modifier protein bound to a number of target proteins. Required, with oct-4, for the localization of a subset of 7 transmembrane domain odorant receptors, including odr-10, to the cilia of olfactory neurons AWA and AWC. Operates in aggregation behavior, and responses to oxygen levels. This Caenorhabditis elegans protein is Ufm1-specific protease.